The following is a 313-amino-acid chain: tRNA-cytidine(32) 2-sulfurtransferase (313 aa).

Residues serine 47–serine 52 carry the PP-loop motif motif. Positions 122, 125, and 213 each coordinate [4Fe-4S] cluster.

The protein belongs to the TtcA family. Homodimer. It depends on Mg(2+) as a cofactor. Requires [4Fe-4S] cluster as cofactor.

It localises to the cytoplasm. The catalysed reaction is cytidine(32) in tRNA + S-sulfanyl-L-cysteinyl-[cysteine desulfurase] + AH2 + ATP = 2-thiocytidine(32) in tRNA + L-cysteinyl-[cysteine desulfurase] + A + AMP + diphosphate + H(+). Its pathway is tRNA modification. Functionally, catalyzes the ATP-dependent 2-thiolation of cytidine in position 32 of tRNA, to form 2-thiocytidine (s(2)C32). The sulfur atoms are provided by the cysteine/cysteine desulfurase (IscS) system. The polypeptide is tRNA-cytidine(32) 2-sulfurtransferase (Yersinia pseudotuberculosis serotype IB (strain PB1/+)).